Reading from the N-terminus, the 961-residue chain is Lon protease homolog, mitochondrial (961 aa).

Residues 1 to 67 (MAGGTGCVRL…SPAAAGHWRG (67 aa)) constitute a mitochondrion transit peptide. Disordered regions lie at residues 76–103 (GGGA…GSAG) and 220–262 (QLEV…VVVG). The Lon N-terminal domain occupies 125 to 371 (LPLIAVTRNP…KALSLLKKEF (247 aa)). Over residues 235-244 (KLRKKPKRGK) the composition is skewed to basic residues. Basic and acidic residues predominate over residues 245 to 257 (KEAEEDGATKRPL). An ATP-binding site is contributed by 524 to 531 (GPPGVGKT). The region spanning 760 to 951 (VTPPGVVMGL…REIFDIAFPE (192 aa)) is the Lon proteolytic domain. Residues 784–801 (SLRRPRDRDSDKGDKDGS) are compositionally biased toward basic and acidic residues. A disordered region spans residues 784–803 (SLRRPRDRDSDKGDKDGSLE). Catalysis depends on residues S857 and K900.

Belongs to the peptidase S16 family. In terms of assembly, homohexamer. Organized in a ring with a central cavity. The ATP-binding and proteolytic domains (AP-domain) form a hexameric chamber, while the N-terminal domain is arranged as a trimer of dimers. DNA and RNA binding is stimulated by substrate and inhibited by ATP binding. Interacts with TWNK and mitochondrial DNA polymerase subunit POLG.

The protein resides in the mitochondrion matrix. It catalyses the reaction Hydrolysis of proteins in presence of ATP.. Functionally, ATP-dependent serine protease that mediates the selective degradation of misfolded, unassembled or oxidatively damaged polypeptides as well as certain short-lived regulatory proteins in the mitochondrial matrix. Endogenous substrates include mitochondrial steroidogenic acute regulatory (StAR) protein, DELE1, helicase Twinkle (TWNK) and the large ribosomal subunit protein MRPL32/bL32m. MRPL32/bL32m is protected from degradation by LONP1 when it is bound to a nucleic acid (RNA), but TWNK is not. May also have a chaperone function in the assembly of inner membrane protein complexes. Participates in the regulation of mitochondrial gene expression and in the maintenance of the integrity of the mitochondrial genome. Binds to mitochondrial promoters and RNA in a single-stranded, site-specific, and strand-specific manner. May regulate mitochondrial DNA replication and/or gene expression using site-specific, single-stranded DNA binding to target the degradation of regulatory proteins binding to adjacent sites in mitochondrial promoters. This is Lon protease homolog, mitochondrial from Bos taurus (Bovine).